We begin with the raw amino-acid sequence, 133 residues long: Fluoride-specific ion channel FluC (133 aa).

Helical transmembrane passes span 3–23 (AVVWWQSLLLVMLGGAFGSGL), 41–61 (WGTLAVNLIGSFVAGFLLIWV), 76–96 (IVGLIGGLTTFSSLMVECLVF), and 103–123 (LIVGFYLCITLLFGLLFVFLG). Positions 81 and 84 each coordinate Na(+).

It belongs to the fluoride channel Fluc/FEX (TC 1.A.43) family.

The protein localises to the cell inner membrane. It carries out the reaction fluoride(in) = fluoride(out). Its activity is regulated as follows. Na(+) is not transported, but it plays an essential structural role and its presence is essential for fluoride channel function. Its function is as follows. Fluoride-specific ion channel. Important for reducing fluoride concentration in the cell, thus reducing its toxicity. The chain is Fluoride-specific ion channel FluC from Xylella fastidiosa (strain M23).